The following is a 138-amino-acid chain: Phospholipase A2 homolog (138 aa).

An N-terminal signal peptide occupies residues 1–16 (MRALWIVAVWLIGVEG). Disulfide bonds link C42–C131, C44–C60, C59–C111, C65–C138, C66–C104, C73–C97, and C91–C102. An important for membrane-damaging activities in eukaryotes and bacteria; heparin-binding region spans residues 121 to 133 (KKYTYYPNFLCKG).

This sequence belongs to the phospholipase A2 family. Group II subfamily. S49 sub-subfamily. In terms of assembly, monomer. Expressed by the venom gland.

It localises to the secreted. Snake venom phospholipase A2 homolog that lacks enzymatic activity. Shows high myotoxin activities and displays edema-inducing activities. Has cytotoxic activities against HUVEC cells (LC(50)=5.0 uL) and human lung adenocarcinoma A549 cells (LC(50)=5.2 uL). The protein is Phospholipase A2 homolog of Echis ocellatus (Ocellated saw-scaled viper).